The chain runs to 207 residues: Octanoyltransferase (207 aa).

Positions 29–204 (DDTADELWLV…ELMVQLGDEE (176 aa)) constitute a BPL/LPL catalytic domain. Substrate contacts are provided by residues 68–75 (RGGQVTYH), 135–137 (SLG), and 148–150 (GVA). Residue C166 is the Acyl-thioester intermediate of the active site.

This sequence belongs to the LipB family.

It is found in the cytoplasm. It catalyses the reaction octanoyl-[ACP] + L-lysyl-[protein] = N(6)-octanoyl-L-lysyl-[protein] + holo-[ACP] + H(+). It functions in the pathway protein modification; protein lipoylation via endogenous pathway; protein N(6)-(lipoyl)lysine from octanoyl-[acyl-carrier-protein]: step 1/2. Functionally, catalyzes the transfer of endogenously produced octanoic acid from octanoyl-acyl-carrier-protein onto the lipoyl domains of lipoate-dependent enzymes. Lipoyl-ACP can also act as a substrate although octanoyl-ACP is likely to be the physiological substrate. This chain is Octanoyltransferase, found in Methylococcus capsulatus (strain ATCC 33009 / NCIMB 11132 / Bath).